The following is a 231-amino-acid chain: uncharacterized protein (231 aa).

10-34 (VVTGAGSGIGEAIATLLHEEGAKVV) provides a ligand contact to NADP(+). Residue S140 participates in substrate binding. The active-site Proton acceptor is the Y153.

The protein belongs to the short-chain dehydrogenases/reductases (SDR) family.

This is an uncharacterized protein from Staphylococcus aureus (strain MRSA252).